The primary structure comprises 180 residues: ATP-dependent protease subunit HslV (180 aa).

The active site involves T8. Positions 165, 168, and 171 each coordinate Na(+).

The protein belongs to the peptidase T1B family. HslV subfamily. In terms of assembly, a double ring-shaped homohexamer of HslV is capped on each side by a ring-shaped HslU homohexamer. The assembly of the HslU/HslV complex is dependent on binding of ATP.

It localises to the cytoplasm. It catalyses the reaction ATP-dependent cleavage of peptide bonds with broad specificity.. With respect to regulation, allosterically activated by HslU binding. In terms of biological role, protease subunit of a proteasome-like degradation complex believed to be a general protein degrading machinery. This is ATP-dependent protease subunit HslV from Staphylococcus saprophyticus subsp. saprophyticus (strain ATCC 15305 / DSM 20229 / NCIMB 8711 / NCTC 7292 / S-41).